Here is an 828-residue protein sequence, read N- to C-terminus: ADP-ribosylation factor GTPase-activating protein AGD1 (828 aa).

The BAR domain maps to 1-225 (MHFAKLDDSP…INQVLAYAHQ (225 aa)). Residues 225 to 255 (QSRECANYEMASLNERMQEYQRQVDRETRNS) are a coiled coil. Positions 247 to 268 (QVDRETRNSCVSPTGDGMRHNS) are disordered. A PH domain is found at 288–425 (QTIRQGYLSK…WIEKITGVIA (138 aa)). Ser441 carries the phosphoserine modification. The 146-residue stretch at 498–643 (EKPIDVLTRV…IFVRKAIDSQ (146 aa)) folds into the Arf-GAP domain. Residues 513-536 (CADCGAPEPDWASLNLGVLICIEC) form a C4-type zinc finger. Positions 590–600 (TSSASRSSGTP) are enriched in low complexity. Positions 590–611 (TSSASRSSGTPKSDRPRKLLVR) are disordered. 2 ANK repeats span residues 735-764 (NDCS…KINA) and 768-797 (KGRT…DPNA).

In terms of tissue distribution, expressed in roots, but not in hypocotyls or cotyledons. Low levels detected in leaf and shoot apical meristems and in siliques.

It is found in the endosome. Probable GTPase-activating protein. Regulator of membrane trafficking. Required for maintaining a straight growth of root hairs. The protein is ADP-ribosylation factor GTPase-activating protein AGD1 (AGD1) of Arabidopsis thaliana (Mouse-ear cress).